The primary structure comprises 563 residues: Probable terpene synthase 4 (563 aa).

Residues D316, D320, and E469 each contribute to the Mg(2+) site. The DDXXD motif motif lies at 316–320; the sequence is DDIFD.

This sequence belongs to the terpene synthase family. The cofactor is Mg(2+).

In terms of biological role, probable sesquiterpene synthase. This chain is Probable terpene synthase 4 (TPS4), found in Ricinus communis (Castor bean).